A 602-amino-acid chain; its full sequence is Rho family-interacting cell polarization regulator 2 (602 aa).

Residues 46-73 form a disordered region; it reads KKPQAKVKKMHNLGHKNSTTPKEPQPKR. The segment covering 48-59 has biased composition (basic residues); it reads PQAKVKKMHNLG. Residues 83-112 are a coiled coil; it reads NGLDEYLEVHQTELDKLTAQLKDMRRNSRL. Positions 173–421 are necessary for interaction with NCAM and myoblast protrusion formation; that stretch reads RESLTEINRS…TTAATQHRAL (249 aa). Residues 384–474 form a disordered region; it reads GDLPYEDRVP…RSEVCQKPSN (91 aa). The segment covering 403–416 has biased composition (polar residues); that stretch reads AHVSSSPDITTAAT. Positions 423 to 437 are enriched in low complexity; it reads SSESSSPDCSSSDSC.

It belongs to the RIPOR family. As to quaternary structure, homooligomer; homooligomerization is regulated by RHOC and leads to the formation of concatemers through the association of N- and C-termini. Interacts with NCAM.

Its subcellular location is the cytoplasm. It is found in the cytoskeleton. The protein localises to the cell projection. It localises to the filopodium. The protein resides in the apical cell membrane. Its subcellular location is the stereocilium. It is found in the stereocilium membrane. Its function is as follows. Acts as an inhibitor of the small GTPase RHOA and plays several roles in the regulation of myoblast and hair cell differentiation, lymphocyte T proliferation and neutrophil polarization. Plays a role in fetal mononuclear myoblast differentiation by promoting filopodia and myotube formation. Maintains naive T lymphocytes in a quiescent state and prevents chemokine-induced T lymphocyte responses, such as cell adhesion, polarization and migration. Involved also in the regulation of neutrophil polarization, chemotaxis and adhesion. Required for normal development of inner and outer hair cell stereocilia within the cochlea of the inner ear. Plays a role for maintaining the structural organization of the basal domain of stereocilia. Involved in mechanosensory hair cell function. Required for normal hearing. The polypeptide is Rho family-interacting cell polarization regulator 2 (Gallus gallus (Chicken)).